A 2350-amino-acid polypeptide reads, in one-letter code: Probable JmjC domain-containing histone demethylation protein 2C (2350 aa).

2 disordered regions span residues 96 to 302 and 314 to 336; these read TRAQ…LQEC and PKDRLVSRTPTPKCVTDIKNDTH. Positions 98–127 are enriched in polar residues; sequence AQANSPRPAMNSQAAVPKQNTHQQQQQRSI. Ser-135 and Ser-138 each carry phosphoserine. Residues 141–160 show a composition bias toward basic and acidic residues; that stretch reads DEEKMKEDKYDCVSRGENPK. Over residues 161–171 the composition is skewed to basic residues; that stretch reads GKNKHVVTKRR. Residues 172 to 189 show a composition bias toward basic and acidic residues; sequence KPEEAEKRLSMKRLRTDN. Low complexity predominate over residues 190–200; the sequence is ASDASESSDAE. Residues Ser-191 and Ser-194 each carry the phosphoserine modification. The span at 257-280 shows a compositional bias: basic and acidic residues; sequence QEDKNHNEGEKPKSTDSHLQDKMT. Polar residues predominate over residues 281-302; it reads LRSSEQATVADHNSNDSVLQEC. A phosphoserine mark is found at Ser-294 and Ser-320. Phosphothreonine is present on Thr-324. 7 positions are modified to phosphoserine: Ser-420, Ser-436, Ser-457, Ser-458, Ser-460, Ser-471, and Ser-762. Disordered regions lie at residues 426 to 486, 747 to 766, 859 to 883, 1030 to 1083, and 1422 to 1508; these read SVTE…NSQA, SSAEPHRPHKITVHSSPPLT, RENYSRVVPSSSSPKSHAIKQDKDV, RKES…DQSL, and EKVS…VPRS. 2 stretches are compositionally biased toward low complexity: residues 863–874 and 1034–1045; these read SRVVPSSSSPKS and SYSSLSPPTLTP. Polar residues predominate over residues 1071–1083; the sequence is SQSNFKNSSDQSL. The span at 1454 to 1463 shows a compositional bias: basic residues; that stretch reads KRQPKPTYKK. Over residues 1464–1480 the composition is skewed to basic and acidic residues; sequence KQNDLQKRKGEVEEDSK. The C6-type zinc-finger motif lies at 1657-1682; the sequence is CDACEATLFNVHWVCRKCGFVACLDC. The span at 1776-1818 shows a compositional bias: polar residues; sequence KTSVSLPESQQQNSPQKSQTNGNSSPGSASTDSRLTPPESQSP. The segment at 1776–1874 is disordered; the sequence is KTSVSLPESQ…PASQSNEQGS (99 aa). Phosphoserine is present on Ser-1800. Over residues 1826–1849 the composition is skewed to basic and acidic residues; sequence AEQKSREEKQENKEFTLEREIKED. The segment covering 1855–1874 has biased composition (polar residues); it reads SDSPNGSTSPPASQSNEQGS. The LXXLL motif signature appears at 1876 to 1880; that stretch reads LRDLL. The segment at 1933–1962 is disordered; it reads PNKTSKINIKSEPNEEPKESSLPATDESNK. Lys-1942 participates in a covalent cross-link: Glycyl lysine isopeptide (Lys-Gly) (interchain with G-Cter in SUMO2). One can recognise a JmjC domain in the interval 2084 to 2308; sequence MPTRYEDFLR…QSFHLTQELR (225 aa). Residues His-2146, Glu-2148, and His-2276 each coordinate Fe cation.

Belongs to the JHDM2 histone demethylase family. Fe(2+) serves as cofactor.

The protein localises to the nucleus. In terms of biological role, probable histone demethylase that specifically demethylates 'Lys-9' of histone H3, thereby playing a central role in histone code. Demethylation of Lys residue generates formaldehyde and succinate. May be involved in hormone-dependent transcriptional activation, by participating in recruitment to androgen-receptor target genes. This chain is Probable JmjC domain-containing histone demethylation protein 2C (Jmjd1c), found in Mus musculus (Mouse).